A 673-amino-acid polypeptide reads, in one-letter code: DNA ligase (673 aa).

NAD(+) contacts are provided by residues 33 to 37, 82 to 83, and Glu-117; these read DSVYD and SL. Lys-119 (N6-AMP-lysine intermediate) is an active-site residue. Arg-140, Glu-177, Lys-295, and Lys-319 together coordinate NAD(+). Zn(2+)-binding residues include Cys-413, Cys-416, Cys-431, and Cys-436. A BRCT domain is found at 595-673; that stretch reads AVSQVLAGKK…EAELLALDPK (79 aa).

It belongs to the NAD-dependent DNA ligase family. LigA subfamily. Mg(2+) is required as a cofactor. Mn(2+) serves as cofactor.

The enzyme catalyses NAD(+) + (deoxyribonucleotide)n-3'-hydroxyl + 5'-phospho-(deoxyribonucleotide)m = (deoxyribonucleotide)n+m + AMP + beta-nicotinamide D-nucleotide.. DNA ligase that catalyzes the formation of phosphodiester linkages between 5'-phosphoryl and 3'-hydroxyl groups in double-stranded DNA using NAD as a coenzyme and as the energy source for the reaction. It is essential for DNA replication and repair of damaged DNA. The polypeptide is DNA ligase (Synechococcus sp. (strain JA-3-3Ab) (Cyanobacteria bacterium Yellowstone A-Prime)).